The sequence spans 322 residues: Cytochrome c biogenesis protein CcsA (322 aa).

A run of 8 helical transmembrane segments spans residues V17 to L37, G44 to G64, L71 to F91, L98 to L118, M143 to I163, V225 to N245, E258 to H273, and A286 to L306.

This sequence belongs to the CcmF/CycK/Ccl1/NrfE/CcsA family. As to quaternary structure, may interact with Ccs1.

The protein localises to the plastid. It is found in the chloroplast thylakoid membrane. Functionally, required during biogenesis of c-type cytochromes (cytochrome c6 and cytochrome f) at the step of heme attachment. The polypeptide is Cytochrome c biogenesis protein CcsA (Vitis vinifera (Grape)).